Reading from the N-terminus, the 444-residue chain is Mitogen-activated protein kinase HOG1 (444 aa).

The Protein kinase domain maps to 22-301 (YTNLNPVGMG…AADALAHPYL (280 aa)). ATP-binding positions include 28–36 (VGMGAFGLV) and lysine 51. Aspartate 143 (proton acceptor) is an active-site residue. A Phosphothreonine modification is found at threonine 173. The short motif at 173 to 175 (TGY) is the TXY element. Tyrosine 175 bears the Phosphotyrosine mark. Residues 371–393 (ASKQQQQQQHQTEEQTQQTIAST) are compositionally biased toward low complexity. The interval 371–444 (ASKQQQQQQH…QADQYVSKFK (74 aa)) is disordered. Residues 394 to 405 (PPQAQVTPQQLE) are compositionally biased toward polar residues. Low complexity predominate over residues 406-419 (SGANSNSNSNPSFS). Over residues 427-438 (ETLTNFANQADQ) the composition is skewed to polar residues.

This sequence belongs to the protein kinase superfamily. Ser/Thr protein kinase family. MAP kinase subfamily. HOG1 sub-subfamily. The cofactor is Mg(2+). In terms of processing, dually phosphorylated on Thr-173 and Tyr-175, which activates the enzyme.

Its subcellular location is the cytoplasm. The protein resides in the nucleus. It carries out the reaction L-seryl-[protein] + ATP = O-phospho-L-seryl-[protein] + ADP + H(+). The catalysed reaction is L-threonyl-[protein] + ATP = O-phospho-L-threonyl-[protein] + ADP + H(+). Activated by tyrosine and threonine phosphorylation. Proline-directed serine/threonine-protein kinase involved in a signal transduction pathway that is activated by changes in the osmolarity of the extracellular environment. Controls osmotic regulation of transcription of target genes. This Kluyveromyces lactis (strain ATCC 8585 / CBS 2359 / DSM 70799 / NBRC 1267 / NRRL Y-1140 / WM37) (Yeast) protein is Mitogen-activated protein kinase HOG1 (HOG1).